The sequence spans 157 residues: UPF0262 protein amb3341 (157 aa).

It belongs to the UPF0262 family.

The sequence is that of UPF0262 protein amb3341 from Paramagnetospirillum magneticum (strain ATCC 700264 / AMB-1) (Magnetospirillum magneticum).